A 458-amino-acid chain; its full sequence is Tyrosine phenol-lyase (458 aa).

Lysine 258 is modified (N6-(pyridoxal phosphate)lysine).

It belongs to the beta-eliminating lyase family. As to quaternary structure, homotetramer. Requires pyridoxal 5'-phosphate as cofactor.

The enzyme catalyses L-tyrosine + H2O = phenol + pyruvate + NH4(+). This chain is Tyrosine phenol-lyase (tpl), found in Pasteurella multocida (strain Pm70).